Here is a 545-residue protein sequence, read N- to C-terminus: Thermosome subunit beta (545 aa).

The protein belongs to the TCP-1 chaperonin family. As to quaternary structure, forms a Heterooligomeric complex of two stacked eight-membered rings.

Molecular chaperone; binds unfolded polypeptides in vitro, and has a weak ATPase activity. This chain is Thermosome subunit beta (thsB), found in Archaeoglobus fulgidus (strain ATCC 49558 / DSM 4304 / JCM 9628 / NBRC 100126 / VC-16).